The sequence spans 620 residues: Extensin (620 aa).

The signal sequence occupies residues 1–20 (MKLSTLFALVLLLQSTAILS). Pro residues predominate over residues 34–45 (LPPPVTSQPPPS). Positions 34 to 620 (LPPPVTSQPP…PPYGLLLSTP (587 aa)) are disordered. Residues 70 to 73 (HAPP) form an H-A-P-P repeat. Pro residues predominate over residues 106–129 (NPPPSPVISPSHPPPSYGAPPPSH). The segment covering 145–163 (SHGHAPPSGGHTPPRGQHP) has biased composition (low complexity). One copy of the H-A-P-P repeat lies at 148–151 (HAPP). Residues 164-177 (PSHRRPSPPSRHGH) show a composition bias toward basic residues. The span at 178 to 219 (PPPPTYAQPPPTPIYSPSPQVQPPPTYSPPPPTHVQPTPSPP) shows a compositional bias: pro residues. Residues 205–620 (SPPPPTHVQP…PPYGLLLSTP (416 aa)) are contains the Ser-Pro(4) repeats. Repeat copies occupy residues 229–235 (THRHAPP) and 236–242 (THRHAPP). The segment covering 229 to 241 (THRHAPPTHRHAP) has biased composition (basic residues). A 2 X 7 AA tandem repeats of T-H-R-H-A-P-P region spans residues 229 to 242 (THRHAPPTHRHAPP). 2 stretches are compositionally biased toward pro residues: residues 251–552 (HLPP…PPHW) and 562–613 (GQPP…PPPY). The segment at 499–600 (PPTFSPPPPR…PTPTYGQPPS (102 aa)) is 3 X approximate tandem repeats.

Post-translationally, hydroxylated on proline residues in the S-P-P-P-P repeat. O-glycosylated on hydroxyprolines. Expressed in the tip of the emerging lateral roots.

Its subcellular location is the secreted. It is found in the primary cell wall. Has a specialized structural function, possibly in the mechanical penetration of the cortex and epidermis of the main root. This chain is Extensin (HRGPNT3), found in Nicotiana tabacum (Common tobacco).